We begin with the raw amino-acid sequence, 224 residues long: Proteasome subunit beta (224 aa).

Positions 1-6 are cleaved as a propeptide — removed in mature form; by autocatalysis; that stretch reads MDVMKG. T7 acts as the Nucleophile in catalysis.

This sequence belongs to the peptidase T1B family. As to quaternary structure, the 20S proteasome core is composed of 14 alpha and 14 beta subunits that assemble into four stacked heptameric rings, resulting in a barrel-shaped structure. The two inner rings, each composed of seven catalytic beta subunits, are sandwiched by two outer rings, each composed of seven alpha subunits. The catalytic chamber with the active sites is on the inside of the barrel. Has a gated structure, the ends of the cylinder being occluded by the N-termini of the alpha-subunits. Is capped at one or both ends by the proteasome regulatory ATPase, PAN.

It is found in the cytoplasm. It carries out the reaction Cleavage of peptide bonds with very broad specificity.. With respect to regulation, the formation of the proteasomal ATPase PAN-20S proteasome complex, via the docking of the C-termini of PAN into the intersubunit pockets in the alpha-rings, triggers opening of the gate for substrate entry. Interconversion between the open-gate and close-gate conformations leads to a dynamic regulation of the 20S proteasome proteolysis activity. Functionally, component of the proteasome core, a large protease complex with broad specificity involved in protein degradation. The M.jannaschii proteasome is able to cleave oligopeptides after Glu, Asp, Tyr, Phe, Trp, slightly after Arg, but not after Ala. Thus, displays caspase-like and chymotrypsin-like activities and low level of trypsin-like activity. The chain is Proteasome subunit beta from Methanocaldococcus jannaschii (strain ATCC 43067 / DSM 2661 / JAL-1 / JCM 10045 / NBRC 100440) (Methanococcus jannaschii).